The following is a 190-amino-acid chain: CASP-like protein 1E1 (190 aa).

The interval 1–23 (MEHESKNKVDGMEMEKGKKESGS) is disordered. The Cytoplasmic segment spans residues 1–28 (MEHESKNKVDGMEMEKGKKESGSRKGLE). The helical transmembrane segment at 29 to 49 (LTMRVLALVLTMVAATVLGVA) threads the bilayer. Over 50 to 83 (KQTKVVPIKLIPTLPPLNVSTTAKASYLSAFVYN) the chain is Extracellular. N67 carries N-linked (GlcNAc...) asparagine glycosylation. Residues 84–104 (ISANAIACGYTAISIVIVMIS) form a helical membrane-spanning segment. Residues 105-111 (KGKRSKS) lie on the Cytoplasmic side of the membrane. A helical membrane pass occupies residues 112 to 132 (LLMAVLIGDLMMVALLFSSTG). The Extracellular segment spans residues 133–163 (AAGAIGLMGRHGNKHVMWKKVCGVFGKFCNQ). Residues 164–184 (AAVSVAITLIASVVFMLLVVL) traverse the membrane as a helical segment. Over 185 to 190 (DALKLP) the chain is Cytoplasmic.

This sequence belongs to the Casparian strip membrane proteins (CASP) family. In terms of assembly, homodimer and heterodimers.

It localises to the cell membrane. The polypeptide is CASP-like protein 1E1 (Arabidopsis thaliana (Mouse-ear cress)).